The following is a 259-amino-acid chain: Global transcriptional regulator CodY (259 aa).

The GAF domain stretch occupies residues 1-155 (MALLQKTRKI…GATVVGMEIL (155 aa)). The H-T-H motif DNA-binding region spans 203–222 (ASKIADRVGITRSVIVNALR). Phosphoserine is present on S215.

This sequence belongs to the CodY family.

The protein localises to the cytoplasm. Its function is as follows. DNA-binding global transcriptional regulator which is involved in the adaptive response to starvation and acts by directly or indirectly controlling the expression of numerous genes in response to nutrient availability. During rapid exponential growth, CodY is highly active and represses genes whose products allow adaptation to nutrient depletion. The polypeptide is Global transcriptional regulator CodY (Bacillus licheniformis (strain ATCC 14580 / DSM 13 / JCM 2505 / CCUG 7422 / NBRC 12200 / NCIMB 9375 / NCTC 10341 / NRRL NRS-1264 / Gibson 46)).